The following is a 148-amino-acid chain: 3-dehydroquinate dehydratase (148 aa).

Residue Y22 is the Proton acceptor of the active site. Positions 73, 79, and 86 each coordinate substrate. The active-site Proton donor is H99. Residues 100–101 and R110 each bind substrate; that span reads LS.

The protein belongs to the type-II 3-dehydroquinase family. Homododecamer.

The catalysed reaction is 3-dehydroquinate = 3-dehydroshikimate + H2O. Its pathway is metabolic intermediate biosynthesis; chorismate biosynthesis; chorismate from D-erythrose 4-phosphate and phosphoenolpyruvate: step 3/7. Its function is as follows. Catalyzes a trans-dehydration via an enolate intermediate. In Prochlorococcus marinus (strain MIT 9211), this protein is 3-dehydroquinate dehydratase.